The primary structure comprises 560 residues: DNA ligase B (560 aa).

Catalysis depends on Lys-124, which acts as the N6-AMP-lysine intermediate.

Belongs to the NAD-dependent DNA ligase family. LigB subfamily.

It catalyses the reaction NAD(+) + (deoxyribonucleotide)n-3'-hydroxyl + 5'-phospho-(deoxyribonucleotide)m = (deoxyribonucleotide)n+m + AMP + beta-nicotinamide D-nucleotide.. Catalyzes the formation of phosphodiester linkages between 5'-phosphoryl and 3'-hydroxyl groups in double-stranded DNA using NAD as a coenzyme and as the energy source for the reaction. This is DNA ligase B from Shigella sonnei (strain Ss046).